The chain runs to 640 residues: Biosynthetic arginine decarboxylase (640 aa).

The residue at position 109 (lysine 109) is an N6-(pyridoxal phosphate)lysine. 291-301 is a binding site for substrate; that stretch reads LDVGGGLGVDY.

Belongs to the Orn/Lys/Arg decarboxylase class-II family. SpeA subfamily. Mg(2+) serves as cofactor. Requires pyridoxal 5'-phosphate as cofactor.

The catalysed reaction is L-arginine + H(+) = agmatine + CO2. It participates in amine and polyamine biosynthesis; agmatine biosynthesis; agmatine from L-arginine: step 1/1. Its function is as follows. Catalyzes the biosynthesis of agmatine from arginine. In Synechococcus sp. (strain RCC307), this protein is Biosynthetic arginine decarboxylase.